Consider the following 259-residue polypeptide: Pimeloyl-[acyl-carrier protein] methyl ester esterase (259 aa).

Positions 16–244 constitute an AB hydrolase-1 domain; that stretch reads LVFIHGWGLN…ASHAPFLSHP (229 aa). Substrate-binding positions include Trp-22, 82–83, and 143–147; these read SL and FFNIQ. Ser-82 serves as the catalytic Nucleophile. Residues Asp-207 and His-237 contribute to the active site. His-237 contacts substrate.

Belongs to the AB hydrolase superfamily. Carboxylesterase BioH family. In terms of assembly, monomer.

It is found in the cytoplasm. It catalyses the reaction 6-carboxyhexanoyl-[ACP] methyl ester + H2O = 6-carboxyhexanoyl-[ACP] + methanol + H(+). Its pathway is cofactor biosynthesis; biotin biosynthesis. Functionally, the physiological role of BioH is to remove the methyl group introduced by BioC when the pimeloyl moiety is complete. It allows to synthesize pimeloyl-ACP via the fatty acid synthetic pathway through the hydrolysis of the ester bonds of pimeloyl-ACP esters. The sequence is that of Pimeloyl-[acyl-carrier protein] methyl ester esterase from Wigglesworthia glossinidia brevipalpis.